The sequence spans 306 residues: Follistatin-related protein 1 (306 aa).

Positions 1-18 (MWKRWLALALVTIALVHG) are cleaved as a signal peptide. One can recognise a Follistatin-like domain in the interval 28-51 (ICANVFCGAGRECAVTEKGEPTCL). Cystine bridges form between C29/C40, C34/C50, C52/C82, C56/C75, and C64/C96. In terms of domain architecture, Kazal-like spans 46-98 (GEPTCLCIEQCKPHKRPVCGSNGKTYLNHCELHRDACLTGSKIQVDYDGHCKE). A glycan (N-linked (GlcNAc...) asparagine) is linked at N142. Residues 142–176 (NYSEILDKYFKSFDNGDSHLDSSEFLKFVEQNETA) enclose the EF-hand 1 domain. Phosphoserine is present on S163. N173 and N178 each carry an N-linked (GlcNAc...) asparagine glycan. The 36-residue stretch at 191 to 226 (LRGLCVDALIELSDENADWKLSFQEFLKCLNPSFNP) folds into the EF-hand 2 domain. Positions 231–285 (CALEDETYADGAETEVDCNRCVCSCGHWVCTAMTCDGKNQKGVQTHTEEEMTRYA) constitute a VWFC domain.

Homodimer. Interacts with SCN10A. Interacts with DIP2A; DIP2A may act as a cell surface receptor for FSTL1. Interacts with BMP4. Interacts with CD14; this interaction promotes TL4-mediated signaling cascade.

It is found in the secreted. Its function is as follows. Secreted glycoprotein that is involved in various physiological processes, such as angiogenesis, regulation of the immune response, cell proliferation and differentiation. Plays a role in the development of the central nervous system, skeletal system, lungs, and ureter. Promotes endothelial cell survival, migration and differentiation into network structures in an AKT-dependent manner. Also promotes survival of cardiac myocytes. Initiates various signaling cascades by activating different receptors on the cell surface such as DIP2A, TLR4 or BMP receptors. This Rattus norvegicus (Rat) protein is Follistatin-related protein 1 (Fstl1).